Here is a 396-residue protein sequence, read N- to C-terminus: MAHPQSPGEFQILAAEGPTAGAAWTRHSNDAYPKYSALSKTHWEMWMLEGIEQTGNAGVTVTFFIDGSQTFHGNDPLHITFHALLPDGAIEKHHLIAAAVRVRETDASIVLEWPSKENGDGTEANSFSRIEVAQDHSSATATFNVPGAVQGSLALTSYTRSPDPTAGALGPAVSHRQIMTGAHAESDLSFPGSGRRLRFAGKGGHDRCWMEAAFPAILSDTTYVRGHAGPYTFASLGVVSRMGESRGRNCQKFRLLRDGVEVFASKSDTVSLTEDYFVLRSSHGGPVKGPFLDTTTGYRLDFVRPRAGKHWAFEIAHEKVWWSMPLGPPPLVREGNSGFVSKVRGGEVGGDADGETFEGAGDIGQIQMPELSTLVELKTLKAKAAAAATAPAPAEQ.

Belongs to the Diels-Alderase family.

The protein operates within secondary metabolite biosynthesis. In terms of biological role, diels-Alderase; part of the gene cluster that mediates the biosynthesis of macrophasetins, 3-decalinoyltetramic acids (DTAs) which feature a tetramate (pyrrolidine-2,4-dione) unit connected to a decalin fragment and that have potent bioactivities. The PKS-NRPS mpsA together with its associated enoylreductase partner mpsG incorporate one unit of acetyl-CoA, seven units of malonyl-CoA, and one unit of L-alanine to assemble the linear tetramic acid intermediate corresponding to the backbone of macrophasetins. Without the Diels-Alderase mpsD, the mpsA/G product can undergo the non-enzymatic intramolecular Diels-Alder (IMDA) reaction to generate both macrophasetin A and macrophasetin B. Catalyzed by mpsD, the linear tetramic acid intermediate is thoroughly converted to macrophasetin A via the endo-IMDA reaction in a regioselective and stereoselective manner. Finally, the cytochrome P450 monooxygenase mpsF catalyzes the hydroxylation at C20 to yield the end product macrophasetin C. This chain is Diels-Alderase mpsD, found in Macrophomina phaseolina (strain MS6) (Charcoal rot fungus).